We begin with the raw amino-acid sequence, 403 residues long: MADPKYADLPGIARNEPDVYETSDLPEDDQAEFDAEELTSTSVEHIIVNPNAAYDKFKDKRVGTKGLDFSDRIGKTKRTGYESGEYEMLGEGLGVKETPQQKYQRLLHEVQELTTEVEKIKTTVKESATEEKLTPVVLAKQLAALKQQLVASHLEKLLGPDAAINLTDPDGALAKRLLLQLEATKNSKGTGSGGKTTSGTPPDSSLVTYELHSRPEQDKFSQAAKVAELEKRLTELEATVRCDQDAQNPLSAGLQGACLMDTVELLQAKVGALDLAVLDQVEARLQSVLGKVNEIAKHKASVEDADTQSKVHQLYETIQRWSPIAASLPELVQRLVTIKQLHEQAMQFGQLLTHLDTTQQMIACSLKDNATLLTQVQTTMCENLSTIEGNFANIDERMKKLGK.

The tract at residues methionine 1 to proline 26 is disordered. Alanine 2 carries the N-acetylalanine modification. Tyrosine 6 carries the phosphotyrosine modification. Serine 83 is subject to Phosphoserine. At tyrosine 86 the chain carries Phosphotyrosine. The stretch at glutamine 100–glutamate 130 forms a coiled coil. Residues threonine 134 and threonine 200 each carry the phosphothreonine modification. The disordered stretch occupies residues threonine 184–serine 204. Positions glutamate 216–asparagine 248 form a coiled coil. The residue at position 322 (serine 322) is a Phosphoserine.

The protein belongs to the dynactin subunit 2 family. In terms of assembly, subunit of dynactin, a multiprotein complex part of a tripartite complex with dynein and a adapter, such as BICDL1, BICD2 or HOOK3. The dynactin complex is built around ACTR1A/ACTB filament and consists of an actin-related filament composed of a shoulder domain, a pointed end and a barbed end. Its length is defined by its flexible shoulder domain. The soulder is composed of 2 DCTN1 subunits, 4 DCTN2 and 2 DCTN3. The 4 DCNT2 (via N-terminus) bind the ACTR1A filament and act as molecular rulers to determine the length. The pointed end is important for binding dynein-dynactin cargo adapters and consists of 4 subunits: ACTR10, DCNT4, DCTN5 and DCTN6. The barbed end is composed of a CAPZA1:CAPZB heterodimers, which binds ACTR1A/ACTB filament and dynactin and stabilizes dynactin. Interacts with BICD2 and CEP135. Interacts with DYNAP. Interacts with ECPAS. Interacts with MAPRE1.

It localises to the cytoplasm. The protein resides in the cytoskeleton. It is found in the microtubule organizing center. Its subcellular location is the centrosome. The protein localises to the membrane. In terms of biological role, part of the dynactin complex that activates the molecular motor dynein for ultra-processive transport along microtubules. In the dynactin soulder domain, binds the ACTR1A filament and acts as a molecular ruler to determine the length. Modulates cytoplasmic dynein binding to an organelle, and plays a role in prometaphase chromosome alignment and spindle organization during mitosis. Involved in anchoring microtubules to centrosomes. May play a role in synapse formation during brain development. The protein is Dynactin subunit 2 (DCTN2) of Bos taurus (Bovine).